Reading from the N-terminus, the 57-residue chain is Aspartyl-phosphate phosphatase YnzD (57 aa).

This sequence belongs to the spo0E family.

Its function is as follows. Aspartyl-phosphate phosphatase which specifically dephosphorylates the sporulation transcription factor Spo0A-P and negatively regulates the sporulation initiation pathway in order to control the proper timing of sporulation. In Bacillus subtilis (strain 168), this protein is Aspartyl-phosphate phosphatase YnzD (ynzD).